The chain runs to 357 residues: Dihydroorotate dehydrogenase (quinone) (357 aa).

Residues 61–65 (AGFDK) and Thr-85 each bind FMN. Lys-65 is a binding site for substrate. 110–114 (NRFGF) is a binding site for substrate. Residues Asn-141 and Asn-172 each coordinate FMN. Residue Asn-172 participates in substrate binding. The Nucleophile role is filled by Ser-175. Asn-177 contacts substrate. FMN is bound by residues Lys-217 and Gly-245. Residue 246–247 (NT) coordinates substrate. FMN-binding positions include Gly-268, Gly-297, and 318-319 (YS).

Belongs to the dihydroorotate dehydrogenase family. Type 2 subfamily. In terms of assembly, monomer. Requires FMN as cofactor.

The protein resides in the cell membrane. The enzyme catalyses (S)-dihydroorotate + a quinone = orotate + a quinol. The protein operates within pyrimidine metabolism; UMP biosynthesis via de novo pathway; orotate from (S)-dihydroorotate (quinone route): step 1/1. Its function is as follows. Catalyzes the conversion of dihydroorotate to orotate with quinone as electron acceptor. The polypeptide is Dihydroorotate dehydrogenase (quinone) (Xanthobacter autotrophicus (strain ATCC BAA-1158 / Py2)).